A 321-amino-acid chain; its full sequence is DNA repair and recombination protein RadA (321 aa).

ATP is bound at residue 111 to 118; it reads GEFGSGKT.

This sequence belongs to the eukaryotic RecA-like protein family.

Its function is as follows. Involved in DNA repair and in homologous recombination. Binds and assemble on single-stranded DNA to form a nucleoprotein filament. Hydrolyzes ATP in a ssDNA-dependent manner and promotes DNA strand exchange between homologous DNA molecules. This chain is DNA repair and recombination protein RadA, found in Sulfolobus acidocaldarius (strain ATCC 33909 / DSM 639 / JCM 8929 / NBRC 15157 / NCIMB 11770).